Here is a 450-residue protein sequence, read N- to C-terminus: 3-phosphoshikimate 1-carboxyvinyltransferase (450 aa).

The segment at 1 to 25 (MSAHGDPKPMTARKGGALTGTAEVP) is disordered. 3-phosphoshikimate-binding residues include Lys28, Ser29, and Arg33. A phosphoenolpyruvate-binding site is contributed by Lys28. Phosphoenolpyruvate is bound by residues Gly101 and Arg129. The 3-phosphoshikimate site is built by Ser174, Gln176, Asp327, and Lys354. Gln176 lines the phosphoenolpyruvate pocket. The active-site Proton acceptor is Asp327. Residues Arg358 and Arg403 each coordinate phosphoenolpyruvate.

It belongs to the EPSP synthase family. In terms of assembly, monomer.

It is found in the cytoplasm. The enzyme catalyses 3-phosphoshikimate + phosphoenolpyruvate = 5-O-(1-carboxyvinyl)-3-phosphoshikimate + phosphate. It functions in the pathway metabolic intermediate biosynthesis; chorismate biosynthesis; chorismate from D-erythrose 4-phosphate and phosphoenolpyruvate: step 6/7. Its function is as follows. Catalyzes the transfer of the enolpyruvyl moiety of phosphoenolpyruvate (PEP) to the 5-hydroxyl of shikimate-3-phosphate (S3P) to produce enolpyruvyl shikimate-3-phosphate and inorganic phosphate. This chain is 3-phosphoshikimate 1-carboxyvinyltransferase, found in Jannaschia sp. (strain CCS1).